Here is a 388-residue protein sequence, read N- to C-terminus: tRNA(Ile)-lysidine synthase (388 aa).

51–56 is a binding site for ATP; it reads SGGRDS.

This sequence belongs to the tRNA(Ile)-lysidine synthase family.

The protein localises to the cytoplasm. The catalysed reaction is cytidine(34) in tRNA(Ile2) + L-lysine + ATP = lysidine(34) in tRNA(Ile2) + AMP + diphosphate + H(+). Functionally, ligates lysine onto the cytidine present at position 34 of the AUA codon-specific tRNA(Ile) that contains the anticodon CAU, in an ATP-dependent manner. Cytidine is converted to lysidine, thus changing the amino acid specificity of the tRNA from methionine to isoleucine. In Bifidobacterium longum (strain NCC 2705), this protein is tRNA(Ile)-lysidine synthase.